Here is a 326-residue protein sequence, read N- to C-terminus: Olfactory receptor 11H2 (326 aa).

The Extracellular portion of the chain corresponds to Met1–Ser44. N-linked (GlcNAc...) asparagine glycosylation is found at Asn13 and Asn18. Residues Leu45–Trp65 traverse the membrane as a helical segment. Over Cys66–Thr72 the chain is Cytoplasmic. The helical transmembrane segment at Pro73 to Val93 threads the bilayer. Residues Pro94–Cys112 are Extracellular-facing. A glycan (N-linked (GlcNAc...) asparagine) is linked at Asn106. An intrachain disulfide couples Cys112 to Cys194. Residues Phe113 to Met133 traverse the membrane as a helical segment. At Ala134–Lys158 the chain is on the cytoplasmic side. A helical transmembrane segment spans residues Leu159–Ser179. Residues Gln180–Thr216 are Extracellular-facing. Residues Leu217 to Leu237 traverse the membrane as a helical segment. Over Lys238–His259 the chain is Cytoplasmic. A helical transmembrane segment spans residues Leu260–Gly280. The Extracellular segment spans residues His281–Lys287. The helical transmembrane segment at Ile288–Gln308 threads the bilayer. Residues Asn309 to Ile326 are Cytoplasmic-facing.

The protein belongs to the G-protein coupled receptor 1 family.

It localises to the cell membrane. Functionally, odorant receptor. The chain is Olfactory receptor 11H2 (OR11H2) from Homo sapiens (Human).